The primary structure comprises 103 residues: MYAVFQSGGKQHRVSEGQTLRLEKLEAETGANVEFDCVLLVANGEEVTVGAPFVTGGKVTAEVVTHGRGDKIKVVKFRRRKHSRKQMGHRQWFTEVKITGISA.

The protein belongs to the bacterial ribosomal protein bL21 family. As to quaternary structure, part of the 50S ribosomal subunit. Contacts protein L20.

This protein binds to 23S rRNA in the presence of protein L20. The chain is Large ribosomal subunit protein bL21 from Photobacterium profundum (strain SS9).